Consider the following 361-residue polypeptide: Chorismate synthase (361 aa).

NADP(+)-binding residues include R48 and R54. FMN is bound by residues 131 to 133, 243 to 244, G287, 302 to 306, and R328; these read RSS, NA, and KPTSS.

It belongs to the chorismate synthase family. Homotetramer. Requires FMNH2 as cofactor.

It carries out the reaction 5-O-(1-carboxyvinyl)-3-phosphoshikimate = chorismate + phosphate. The protein operates within metabolic intermediate biosynthesis; chorismate biosynthesis; chorismate from D-erythrose 4-phosphate and phosphoenolpyruvate: step 7/7. Its function is as follows. Catalyzes the anti-1,4-elimination of the C-3 phosphate and the C-6 proR hydrogen from 5-enolpyruvylshikimate-3-phosphate (EPSP) to yield chorismate, which is the branch point compound that serves as the starting substrate for the three terminal pathways of aromatic amino acid biosynthesis. This reaction introduces a second double bond into the aromatic ring system. This Rhodopseudomonas palustris (strain BisB5) protein is Chorismate synthase.